Consider the following 39-residue polypeptide: Metallocarboxypeptidase inhibitor (39 aa).

Q1 carries the pyrrolidone carboxylic acid modification. 3 disulfides stabilise this stretch: C8–C24, C12–C27, and C18–C34.

In terms of tissue distribution, highly concentrated in tubers. Closely related but distinct forms of MCPI are present in leaves, stems and buds.

In terms of biological role, may play a defensive role against insect attacks. Inhibits A.aegypti carboxypeptidase CPB1. The sequence is that of Metallocarboxypeptidase inhibitor from Solanum tuberosum (Potato).